A 468-amino-acid chain; its full sequence is ATP synthase subunit beta (468 aa).

Position 155–162 (155–162 (GGAGVGKT)) interacts with ATP.

This sequence belongs to the ATPase alpha/beta chains family. In terms of assembly, F-type ATPases have 2 components, CF(1) - the catalytic core - and CF(0) - the membrane proton channel. CF(1) has five subunits: alpha(3), beta(3), gamma(1), delta(1), epsilon(1). CF(0) has three main subunits: a(1), b(2) and c(9-12). The alpha and beta chains form an alternating ring which encloses part of the gamma chain. CF(1) is attached to CF(0) by a central stalk formed by the gamma and epsilon chains, while a peripheral stalk is formed by the delta and b chains.

Its subcellular location is the cell membrane. The catalysed reaction is ATP + H2O + 4 H(+)(in) = ADP + phosphate + 5 H(+)(out). Functionally, produces ATP from ADP in the presence of a proton gradient across the membrane. The catalytic sites are hosted primarily by the beta subunits. The polypeptide is ATP synthase subunit beta (Streptococcus thermophilus (strain ATCC BAA-250 / LMG 18311)).